Reading from the N-terminus, the 357-residue chain is MHNQYGSIFSITTWGESHGPAIGVVIDGCPAGLSLSPEDFLPAMARRRPGQLHTSPRQEPDLVTILSGVYQNKTTGTPISLLIENKDVSSSSYEHLQHCYRPGHAQFAYEGKYGFADNRGGGRASARETASRVAAGVIAKKILLSQGIETLAFLSGFGTLESKNYPKLSDSLIQQVHTSPFYTLLPQEEIQNLLLLNPDDSFGGVVSFITSPLPIGLGEPVFGKLPALLAAGMMSIPAAKGFEIGAGFSSSQMTGSAYLDAFIADESGVSLQSNRCGGALGGISIGQPLEGRVAFKPTSSIKKPCSSVLKDGTPIAYRTPNQGRHDPCVAIRAVAVVEAMLDLTLVDLLLQHRCTQL.

NADP(+) is bound at residue Arg-47. Residues Arg-123–Ser-125, Gly-281, Lys-296–Ser-300, and Arg-324 each bind FMN.

This sequence belongs to the chorismate synthase family. In terms of assembly, homotetramer. FMNH2 serves as cofactor.

The enzyme catalyses 5-O-(1-carboxyvinyl)-3-phosphoshikimate = chorismate + phosphate. It participates in metabolic intermediate biosynthesis; chorismate biosynthesis; chorismate from D-erythrose 4-phosphate and phosphoenolpyruvate: step 7/7. Functionally, catalyzes the anti-1,4-elimination of the C-3 phosphate and the C-6 proR hydrogen from 5-enolpyruvylshikimate-3-phosphate (EPSP) to yield chorismate, which is the branch point compound that serves as the starting substrate for the three terminal pathways of aromatic amino acid biosynthesis. This reaction introduces a second double bond into the aromatic ring system. The chain is Chorismate synthase from Chlamydia trachomatis serovar L2 (strain ATCC VR-902B / DSM 19102 / 434/Bu).